The following is a 398-amino-acid chain: Dual-specificity RNA methyltransferase RlmN (398 aa).

The active-site Proton acceptor is Glu100. Residues 106–345 (DGDRGTLCVS…TTVRTTRGDD (240 aa)) enclose the Radical SAM core domain. Cys113 and Cys350 are disulfide-bonded. [4Fe-4S] cluster contacts are provided by Cys120, Cys124, and Cys127. Residues 174–175 (GE), Ser206, 228–230 (SLH), and Asn307 each bind S-adenosyl-L-methionine. Catalysis depends on Cys350, which acts as the S-methylcysteine intermediate.

The protein belongs to the radical SAM superfamily. RlmN family. [4Fe-4S] cluster is required as a cofactor.

The protein localises to the cytoplasm. The enzyme catalyses adenosine(2503) in 23S rRNA + 2 reduced [2Fe-2S]-[ferredoxin] + 2 S-adenosyl-L-methionine = 2-methyladenosine(2503) in 23S rRNA + 5'-deoxyadenosine + L-methionine + 2 oxidized [2Fe-2S]-[ferredoxin] + S-adenosyl-L-homocysteine. It carries out the reaction adenosine(37) in tRNA + 2 reduced [2Fe-2S]-[ferredoxin] + 2 S-adenosyl-L-methionine = 2-methyladenosine(37) in tRNA + 5'-deoxyadenosine + L-methionine + 2 oxidized [2Fe-2S]-[ferredoxin] + S-adenosyl-L-homocysteine. Specifically methylates position 2 of adenine 2503 in 23S rRNA and position 2 of adenine 37 in tRNAs. m2A2503 modification seems to play a crucial role in the proofreading step occurring at the peptidyl transferase center and thus would serve to optimize ribosomal fidelity. The protein is Dual-specificity RNA methyltransferase RlmN of Saccharophagus degradans (strain 2-40 / ATCC 43961 / DSM 17024).